Here is a 264-residue protein sequence, read N- to C-terminus: Thymidylate synthase (264 aa).

Residue arginine 21 participates in dUMP binding. Histidine 51 provides a ligand contact to (6R)-5,10-methylene-5,6,7,8-tetrahydrofolate. 126–127 is a binding site for dUMP; that stretch reads RR. The Nucleophile role is filled by cysteine 146. Residues 166–169, asparagine 177, and 207–209 contribute to the dUMP site; these read RSAD and HLY. Residue aspartate 169 participates in (6R)-5,10-methylene-5,6,7,8-tetrahydrofolate binding. Residue alanine 263 coordinates (6R)-5,10-methylene-5,6,7,8-tetrahydrofolate.

Belongs to the thymidylate synthase family. Bacterial-type ThyA subfamily. As to quaternary structure, homodimer.

It is found in the cytoplasm. The catalysed reaction is dUMP + (6R)-5,10-methylene-5,6,7,8-tetrahydrofolate = 7,8-dihydrofolate + dTMP. It participates in pyrimidine metabolism; dTTP biosynthesis. Its function is as follows. Catalyzes the reductive methylation of 2'-deoxyuridine-5'-monophosphate (dUMP) to 2'-deoxythymidine-5'-monophosphate (dTMP) while utilizing 5,10-methylenetetrahydrofolate (mTHF) as the methyl donor and reductant in the reaction, yielding dihydrofolate (DHF) as a by-product. This enzymatic reaction provides an intracellular de novo source of dTMP, an essential precursor for DNA biosynthesis. The polypeptide is Thymidylate synthase (Legionella pneumophila (strain Paris)).